A 245-amino-acid chain; its full sequence is 3-deoxy-manno-octulosonate cytidylyltransferase (245 aa).

Belongs to the KdsB family.

It is found in the cytoplasm. The enzyme catalyses 3-deoxy-alpha-D-manno-oct-2-ulosonate + CTP = CMP-3-deoxy-beta-D-manno-octulosonate + diphosphate. It functions in the pathway nucleotide-sugar biosynthesis; CMP-3-deoxy-D-manno-octulosonate biosynthesis; CMP-3-deoxy-D-manno-octulosonate from 3-deoxy-D-manno-octulosonate and CTP: step 1/1. Its pathway is bacterial outer membrane biogenesis; lipopolysaccharide biosynthesis. In terms of biological role, activates KDO (a required 8-carbon sugar) for incorporation into bacterial lipopolysaccharide in Gram-negative bacteria. In Rhodopseudomonas palustris (strain TIE-1), this protein is 3-deoxy-manno-octulosonate cytidylyltransferase.